The primary structure comprises 490 residues: Transcription factor MYB101 (490 aa).

The interval M1 to G21 is disordered. 2 HTH myb-type domains span residues G15–L67 and R68–Q122. DNA-binding regions (H-T-H motif) lie at residues W43–L67 and W95–M118. The interval Y168 to P206 is disordered. Residues T169–S186 show a composition bias toward low complexity.

In terms of tissue distribution, present mostly in flowers, siliques and floral shoot tips. Expression is restricted to the subapical pith cells of both vegetative and flowering plants and to the hypocotyl hook. Expressed in pollen grains and pollen tube. Mostly expressed in mature pollen grains, and, to a lower extent, in inflorescences and siliques.

The protein resides in the nucleus. Transcription activator. Binds to 5'-CAACTGTC-3' and/or 5'-TAACAAA-3' motif in target gene promoter (e.g. alpha-amylase) to promote their expression. Positive regulator of abscisic acid (ABA) responses leading to growth arrest during seed germination. Promotes the expression of aleurone-related genes (e.g. CP1, CP, GASA1, BXL1 and BXL2) in seeds. Together with MYB33 and MYB65, promotes the programmed cell death (PCD) leading to vacuolation of protein storage vacuoles (PSVs) in the aleurone layers during seed germination. Maybe involved in the regulation of leaves lamina morphogenesis. Involved in pollen grain development. Together with MYB97 and MYB120, functions as a male factor that controls pollen tube-synergid interaction in fertilization. Required for pollen tube growth arrest and sperm cell release in the female gametophyte, probably via the regulation of pollen tube-specific gene expression. This chain is Transcription factor MYB101, found in Arabidopsis thaliana (Mouse-ear cress).